The chain runs to 342 residues: Isopentenyl-diphosphate delta-isomerase (342 aa).

Residue 6-7 (RK) coordinates substrate. Residues S63, 64 to 66 (SMT), S94, and N122 contribute to the FMN site. Substrate is bound at residue 94 to 96 (SMR). Q157 provides a ligand contact to substrate. A Mg(2+)-binding site is contributed by E158. Residues K189, T219, 269–271 (GLK), and 290–291 (AG) each bind FMN.

Belongs to the IPP isomerase type 2 family. As to quaternary structure, homooctamer. Dimer of tetramers. FMN is required as a cofactor. Requires NADPH as cofactor. Mg(2+) serves as cofactor.

The protein resides in the cytoplasm. It catalyses the reaction isopentenyl diphosphate = dimethylallyl diphosphate. Its function is as follows. Involved in the biosynthesis of isoprenoids. Catalyzes the 1,3-allylic rearrangement of the homoallylic substrate isopentenyl (IPP) to its allylic isomer, dimethylallyl diphosphate (DMAPP). This is Isopentenyl-diphosphate delta-isomerase from Rickettsia bellii (strain RML369-C).